The primary structure comprises 199 residues: DNA repair RAD52-like protein 2, chloroplastic (199 aa).

Residues 1-40 (MALQVQQTSAAFTISSPSTAAARIKLSPFRTVAVNRGVRC) constitute a chloroplast transit peptide. Position 41 is an N-acetylserine (Ser-41).

It belongs to the RAD52 family. Expressed in roots and shoots. Expressed at low levels in cauline leaves, flower buds, flowers and siliques.

Its subcellular location is the plastid. It is found in the chloroplast. Involved in double-stranded DNA break repair. The polypeptide is DNA repair RAD52-like protein 2, chloroplastic (Arabidopsis thaliana (Mouse-ear cress)).